We begin with the raw amino-acid sequence, 358 residues long: Uroporphyrinogen decarboxylase (358 aa).

Substrate-binding positions include 36–40 (RQAGR), Asp-85, Tyr-160, Ser-215, and His-338.

Belongs to the uroporphyrinogen decarboxylase family. As to quaternary structure, homodimer.

It is found in the cytoplasm. It catalyses the reaction uroporphyrinogen III + 4 H(+) = coproporphyrinogen III + 4 CO2. The protein operates within porphyrin-containing compound metabolism; protoporphyrin-IX biosynthesis; coproporphyrinogen-III from 5-aminolevulinate: step 4/4. Functionally, catalyzes the decarboxylation of four acetate groups of uroporphyrinogen-III to yield coproporphyrinogen-III. This is Uroporphyrinogen decarboxylase from Corynebacterium glutamicum (strain ATCC 13032 / DSM 20300 / JCM 1318 / BCRC 11384 / CCUG 27702 / LMG 3730 / NBRC 12168 / NCIMB 10025 / NRRL B-2784 / 534).